We begin with the raw amino-acid sequence, 682 residues long: Transcription factor 12 (682 aa).

Positions 19-27 match the 9aaTAD motif; sequence DLLDFSAMF. Disordered regions lie at residues 25–122, 140–219, and 281–313; these read AMFS…LYSR, LGSP…PPTS, and SVSP…ASHT. Composition is skewed to polar residues over residues 30–48 and 56–76; these read PVNS…QFSG and GTTS…SRGF. Residues Ser-47, Ser-67, and Ser-79 each carry the phosphoserine modification. A compositionally biased stretch (basic and acidic residues) spans 81–93; sequence HYSDHLNDSRLGA. Ser-98 carries the phosphoserine modification. Polar residues-rich tracts occupy residues 101–121 and 144–163; these read PFMN…SLYS and AQLS…SATS. Lys-110 participates in a covalent cross-link: Glycyl lysine isopeptide (Lys-Gly) (interchain with G-Cter in SUMO2). The residue at position 116 (Ser-116) is a Phosphoserine. Residues 119–140 are leucine-zipper; sequence LYSRDTGLPGCQSSLLRQDLGL. Lys-181 participates in a covalent cross-link: Glycyl lysine isopeptide (Lys-Gly) (interchain with G-Cter in SUMO2). An interaction with RUNX1T1 region spans residues 182-196; it reads KVRKVPPGLPSSVYA. A compositionally biased stretch (polar residues) spans 282 to 306; the sequence is VSPTDINTSLPPMSSFHRGSTSSSP. Thr-313 carries the phosphothreonine modification. Ser-333 is modified (phosphoserine). Disordered regions lie at residues 349-395 and 462-580; these read PDHT…SLHS and SASM…ERRM. A compositionally biased stretch (low complexity) spans 352–363; that stretch reads TSSSFPSNPSTP. Polar residues-rich tracts occupy residues 364–376 and 383–395; these read VGSP…TSQW and APSS…SLHS. Over residues 481 to 492 the composition is skewed to low complexity; it reads SVLSSTVTTSST. The segment covering 506–517 has biased composition (polar residues); it reads LQSQSGTVVTTE. Basic and acidic residues-rich tracts occupy residues 518 to 530 and 536 to 551; these read IKTE…ENLH and DDMK…DIKV. Lys-519 is covalently cross-linked (Glycyl lysine isopeptide (Lys-Gly) (interchain with G-Cter in SUMO2)). Phosphoserine is present on Ser-540. Lys-550 participates in a covalent cross-link: Glycyl lysine isopeptide (Lys-Gly) (interchain with G-Cter in SUMO2). At Thr-557 the chain carries Phosphothreonine. Residues Ser-558 and Ser-559 each carry the phosphoserine modification. The segment covering 568–580 has biased composition (basic and acidic residues); that stretch reads PEQKIEREKERRM. The bHLH domain maps to 577-630; it reads ERRMANNARERLRVRDINEAFKELGRMCQLHLKSEKPQTKLLILHQAVAVILSL. Glycyl lysine isopeptide (Lys-Gly) (interchain with G-Cter in SUMO2) cross-links involve residues Lys-609 and Lys-653. The interval 632–655 is class A specific domain; it reads QQVRERNLNPKAACLKRREEEKVS. Residues 651 to 682 are disordered; the sequence is EEKVSAVSAEPPTTLPGTHPGLSETTNPMGHM. Residues 661–672 are compositionally biased toward low complexity; the sequence is PPTTLPGTHPGL. Positions 673 to 682 are enriched in polar residues; it reads SETTNPMGHM.

In terms of assembly, efficient DNA binding requires dimerization with another bHLH protein. Forms homo- or heterooligomers with myogenin, E12 and ITF2 proteins. Interacts with PTF1A. Interacts with NEUROD2. Interacts with RUNX1T1. Interacts with AML1-MTG8/ETO (via nervy homology region 2 in oligomerized form). Interacts with BHLHA9. As to expression, expressed in several tissues and cell types including skeletal muscle, thymus, and a B-cell line.

The protein localises to the nucleus. Functionally, transcriptional regulator. Involved in the initiation of neuronal differentiation. Activates transcription by binding to the E box (5'-CANNTG-3'). May be involved in the functional network that regulates the development of the GnRH axis. In Homo sapiens (Human), this protein is Transcription factor 12 (TCF12).